Consider the following 305-residue polypeptide: Glycine--tRNA ligase alpha subunit (305 aa).

It belongs to the class-II aminoacyl-tRNA synthetase family. Tetramer of two alpha and two beta subunits.

It is found in the cytoplasm. It carries out the reaction tRNA(Gly) + glycine + ATP = glycyl-tRNA(Gly) + AMP + diphosphate. This is Glycine--tRNA ligase alpha subunit from Streptococcus suis (strain 05ZYH33).